We begin with the raw amino-acid sequence, 906 residues long: MCRIVGAPRTLLPLLAALLQASVDASGEISLCKTGFPEDVYSAVLSRDVLEGQPLLNVKFSNCNGKRKVQYESSEPADFKVDEDGMVYAVRSFPLSSEHSKFLIYAQDKETQEKWQVAVKLSLKPALPEDSVKESREIEEIVFPRQVTKHNGYLQRQKRDWVIPPINLPENSRGPFPQELVRIRSDRDKNLSLRYSVTGPGADQPPTGIFIINPISGQLSVTKPLDRELIARFHLRAHAVDINGNQVENPIDIVINVIDMNDNRPEFLHQVWNGTVPEGSKPGTYVMTVTAIDADDPNALNGMLRYRILSQAPSTPSPNMFTINNETGDIITVAAGLDREKVQQYTLIIQATDMEGNPTYGLSNTATAVITVTDVNDNPPEFTAMTFYGEVPENRVDVIVANLTVTDKDQPHTPAWNAIYRISGGDPAGRFAIQTDPNSNDGLVTVVKPIDFETNRMYVLTVAAENQVPLAKGIQHPPQSTATVSVTVIDVNENPYFAPNPKIIRQEEGLHAGTVLTTFTAQDPDRYMQQNIRYTKLSDPANWLKIDSVNGQITTIAVLDRESPNVKANIYNATFLASDNGIPPMSGTGTLQIYLLDINDNAPQVLPQEAEICETPDPNSINITALDYDIDPNAGPFAFDLPLSPVTIKRNWTITRLNGDFAQLNLKIKFLEAGIYEVPIIITDSGNPPKSNISILRVKVCQCDSNGDCTDVDRIVGAGLGTGAIIAILLCIIILLILVLMFVVWMKRRDKERQAKQLLIDPEDDVRDNILKYDEEGGGEEDQDYDLSQLQQPDTVEPDAIKPVGIRRLDERPIHAEPQYPVRSAAPHPGDIGDFINEGLKAADNDPTAPPYDSLLVFDYEGSGSTAGSLSSLNSSSSGGEQDYDYLNDWGPRFKKLADMYGGGDD.

The signal sequence occupies residues 1 to 25 (MCRIVGAPRTLLPLLAALLQASVDA). Positions 26–159 (SGEISLCKTG…HNGYLQRQKR (134 aa)) are excised as a propeptide. Phosphoserine occurs at positions 96 and 135. 5 consecutive Cadherin domains span residues 160–267 (DWVI…RPEF), 268–392 (LHQV…GEVP), 393–497 (ENRV…NPYF), 498–603 (APNP…DNAP), and 604–714 (QVLP…DVDR). The Extracellular portion of the chain corresponds to 160–724 (DWVIPPINLP…IVGAGLGTGA (565 aa)). A Ca(2+)-binding site is contributed by E170. N190 is a glycosylation site (N-linked (GlcNAc...) asparagine). D226, E228, D259, M260, N261, D262, and N263 together coordinate Ca(2+). N273 is a glycosylation site (N-linked (GlcNAc...) asparagine). Ca(2+) contacts are provided by D293, D295, and N301. Residue N325 is glycosylated (N-linked (GlcNAc...) asparagine). Residue D353 participates in Ca(2+) binding. N357, N402, N572, N622, N651, and N692 each carry an N-linked (GlcNAc...) asparagine glycan. Residues 725–746 (IIAILLCIIILLILVLMFVVWM) form a helical membrane-spanning segment. Residues 747–906 (KRRDKERQAK…LADMYGGGDD (160 aa)) lie on the Cytoplasmic side of the membrane. The segment covering 863-880 (SGSTAGSLSSLNSSSSGG) has biased composition (low complexity). The disordered stretch occupies residues 863 to 884 (SGSTAGSLSSLNSSSSGGEQDY).

In terms of assembly, homodimer (via extracellular region). Can also form heterodimers with other cadherins (via extracellular region). Dimerization occurs in trans, i.e. with a cadherin chain from another cell. Interacts with CDCP1. Interacts with PCDH8; this complex may also include TAOK2. The interaction with PCDH8 may lead to internalization through TAOK2/p38 MAPK pathway. Identified in a complex containing FGFR4, NCAM1, CDH2, PLCG1, FRS2, SRC, SHC1, GAP43 and CTTN. May interact with OBSCN (via protein kinase domain 2). Interacts with FBXO45. In terms of processing, cleaved by MMP24. Ectodomain cleavage leads to the generation of a soluble 90 kDa N-terminal soluble fragment and a 45 kDa membrane-bound C-terminal fragment 1 (CTF1), which is further cleaved by gamma-secretase into a 35 kDa. Cleavage in neural stem cells by MMP24 affects CDH2-mediated anchorage of neural stem cells to ependymocytes in the adult subependymal zone, leading to modulate neural stem cell quiescence. May be phosphorylated by OBSCN. Detected in liver, kidney, heart and brain capillaries.

It is found in the cell membrane. The protein resides in the sarcolemma. It localises to the cell junction. The protein localises to the cell surface. Its subcellular location is the desmosome. It is found in the adherens junction. Functionally, calcium-dependent cell adhesion protein; preferentially mediates homotypic cell-cell adhesion by dimerization with a CDH2 chain from another cell. Cadherins may thus contribute to the sorting of heterogeneous cell types. Acts as a regulator of neural stem cells quiescence by mediating anchorage of neural stem cells to ependymocytes in the adult subependymal zone: upon cleavage by MMP24, CDH2-mediated anchorage is affected, leading to modulate neural stem cell quiescence. Plays a role in cell-to-cell junction formation between pancreatic beta cells and neural crest stem (NCS) cells, promoting the formation of processes by NCS cells. Required for proper neurite branching. Required for pre- and postsynaptic organization. CDH2 may be involved in neuronal recognition mechanism. In hippocampal neurons, may regulate dendritic spine density. The sequence is that of Cadherin-2 (CDH2) from Bos taurus (Bovine).